We begin with the raw amino-acid sequence, 37 residues long: Omega-sparatoxin-Hv1a (37 aa).

Intrachain disulfides connect Cys-4–Cys-18, Cys-11–Cys-23, and Cys-17–Cys-33.

In terms of tissue distribution, expressed by the venom gland.

It localises to the secreted. Blocks calcium channels (Cav). This is Omega-sparatoxin-Hv1a from Heteropoda venatoria (Brown huntsman spider).